A 518-amino-acid chain; its full sequence is D-aminopeptidase (518 aa).

Ser62 (nucleophile) is an active-site residue. Catalysis depends on Lys65, which acts as the Proton donor/acceptor. The tract at residues 373–392 is disordered; sequence FGTGPEKMDISGENEAQSSM. An important for specificity region spans residues 477–487; it reads QRSMDAPSPGE. Asp481 contributes to the substrate binding site.

It belongs to the peptidase S12 family. As to quaternary structure, homodimer.

The enzyme catalyses Release of an N-terminal D-amino acid from a peptide, Xaa-|-Yaa-, in which Xaa is preferably D-Ala, D-Ser or D-Thr. D-amino acid amides and methyl esters also are hydrolyzed, as is glycine amide.. Its activity is regulated as follows. Inhibited by beta-lactam compounds such as 6-aminopenicillic acid, 7-aminocephalosporanic acid, benzylpenicillin and ampicillin. Inhibited by p-chloromercuribenzoate. In terms of biological role, hydrolyzes N-terminal residues in D-amino acid-containing peptides. This chain is D-aminopeptidase, found in Brucella melitensis biotype 2 (strain ATCC 23457).